Here is a 122-residue protein sequence, read N- to C-terminus: Methylglyoxal synthase (122 aa).

Residues 1-122 (MRIALIAHDK…DLFIKHLKGK (122 aa)) form the MGS-like domain. Residues histidine 8, lysine 12, 34–37 (TGTT), and 54–55 (SG) contribute to the substrate site. Aspartate 60 (proton donor/acceptor) is an active-site residue. Histidine 87 contacts substrate.

Belongs to the methylglyoxal synthase family.

It carries out the reaction dihydroxyacetone phosphate = methylglyoxal + phosphate. Catalyzes the formation of methylglyoxal from dihydroxyacetone phosphate. This chain is Methylglyoxal synthase, found in Acholeplasma laidlawii (strain PG-8A).